The primary structure comprises 558 residues: Inositol-3-phosphate synthase (558 aa).

The interval 1 to 34 is disordered; sequence MSPTALDACDHHDSFSLPAQDQSKVHPSARRTPE. NAD(+)-binding residues include G99, G100, N101, N102, D174, S210, I211, Q221, R224, T262, A263, N264, T265, G313, S314, D338, S341, N372, N373, D374, K387, G439, D440, D468, and S469.

The protein belongs to the myo-inositol 1-phosphate synthase family. As to quaternary structure, homotetramer. NAD(+) serves as cofactor.

Its subcellular location is the cytoplasm. The enzyme catalyses D-glucose 6-phosphate = 1D-myo-inositol 3-phosphate. It participates in polyol metabolism; myo-inositol biosynthesis; myo-inositol from D-glucose 6-phosphate: step 1/2. Its function is as follows. Key enzyme in myo-inositol biosynthesis pathway that catalyzes the conversion of glucose 6-phosphate to 1-myo-inositol 1-phosphate in a NAD-dependent manner. Rate-limiting enzyme in the synthesis of all inositol-containing compounds. In Cryptococcus neoformans var. grubii serotype A (strain H99 / ATCC 208821 / CBS 10515 / FGSC 9487) (Filobasidiella neoformans var. grubii), this protein is Inositol-3-phosphate synthase.